Consider the following 103-residue polypeptide: Pyrimidine/purine nucleoside phosphorylase (103 aa).

It belongs to the nucleoside phosphorylase PpnP family.

The catalysed reaction is a purine D-ribonucleoside + phosphate = a purine nucleobase + alpha-D-ribose 1-phosphate. It catalyses the reaction adenosine + phosphate = alpha-D-ribose 1-phosphate + adenine. The enzyme catalyses cytidine + phosphate = cytosine + alpha-D-ribose 1-phosphate. It carries out the reaction guanosine + phosphate = alpha-D-ribose 1-phosphate + guanine. The catalysed reaction is inosine + phosphate = alpha-D-ribose 1-phosphate + hypoxanthine. It catalyses the reaction thymidine + phosphate = 2-deoxy-alpha-D-ribose 1-phosphate + thymine. The enzyme catalyses uridine + phosphate = alpha-D-ribose 1-phosphate + uracil. It carries out the reaction xanthosine + phosphate = alpha-D-ribose 1-phosphate + xanthine. Functionally, catalyzes the phosphorolysis of diverse nucleosides, yielding D-ribose 1-phosphate and the respective free bases. Can use uridine, adenosine, guanosine, cytidine, thymidine, inosine and xanthosine as substrates. Also catalyzes the reverse reactions. The chain is Pyrimidine/purine nucleoside phosphorylase from Nocardia farcinica (strain IFM 10152).